Reading from the N-terminus, the 249-residue chain is 5'-nucleotidase SurE (249 aa).

Residues D8, D9, S39, and N91 each contribute to the a divalent metal cation site.

It belongs to the SurE nucleotidase family. The cofactor is a divalent metal cation.

The protein localises to the cytoplasm. The enzyme catalyses a ribonucleoside 5'-phosphate + H2O = a ribonucleoside + phosphate. Nucleotidase that shows phosphatase activity on nucleoside 5'-monophosphates. The chain is 5'-nucleotidase SurE from Vesicomyosocius okutanii subsp. Calyptogena okutanii (strain HA).